The primary structure comprises 175 residues: COMPASS component SDC1 (175 aa).

Residues 1–12 (MNESENSPQHNE) show a composition bias toward polar residues. The tract at residues 1-45 (MNESENSPQHNEVTVPMVEDTSSNADIPMEQIQREDNKNYDKHDN) is disordered. Residues 32–45 (IQREDNKNYDKHDN) show a composition bias toward basic and acidic residues. The segment at 121–162 (QTRKYLNTNVTPHLLAGMRLIAVQQPEDPLRVLGEYLIEQSN) is DPY-30.

This sequence belongs to the dpy-30 family. Component of the Set1C/COMPASS complex which consists of SET1(2), BRE2(2), SPP1(2), SDC1(1), SHG1(1), SWD1(1), SWD2(1), and SWD3(1). Interacts directly with BRE2.

The protein resides in the nucleus. In terms of biological role, component of the Set1C/COMPASS complex that specifically mono-, di- and trimethylates histone H3 to form H3K4me1/2/3, which subsequently plays a role in telomere length maintenance and transcription elongation regulation. COMPASS recognizes ubiquitinated H2B on one face of the nucleosome which stimulates the methylation of H3 on the opposing face. The chain is COMPASS component SDC1 from Saccharomyces cerevisiae (strain ATCC 204508 / S288c) (Baker's yeast).